The sequence spans 192 residues: MGRPVDKSVEQAFYFTKSPQTLVESGATVAYPPRTSNYHYEMELVLAIGKPGFRVSEDQAHELIYGYAAGLDMTRRDLQLVARDKGRPWDTGKDIEEGSVCSEIVPMQGVVVEQGAIALEVNGQTKQSSNVDKLIWNVREIIADLSTYYHLQPGDLIYTGTPEGVGAVVAGDKIIGRVEGIAEISLTVGPAE.

A divalent metal cation is bound by residues Glu41, Glu43, and Asp72.

This sequence belongs to the FAH family. Mg(2+) serves as cofactor. The cofactor is Mn(2+).

It carries out the reaction 3-fumarylpyruvate + H2O = fumarate + pyruvate + H(+). It functions in the pathway aromatic compound metabolism; naphthalene degradation. Its function is as follows. Involved in the catabolism of gentisate (2,5-dihydroxybenzoate) a key intermediates in the aerobic pathways for the metabolism of a large number of aromatic compoun such as naphthalene. Catalyzes the hydrolytic cleavage of fumarylpyruvate to form fumarate and pyruvate. The polypeptide is Fumarylpyruvate hydrolase (Ralstonia sp).